A 395-amino-acid chain; its full sequence is Proteinase-activated receptor 2 (395 aa).

Positions 1-25 (MRSPSAAWLLGGVLLLAASGSCNRT) are cleaved as a signal peptide. N-linked (GlcNAc...) asparagine glycans are attached at residues asparagine 23 and asparagine 29. The propeptide at 26–34 (VPGNKSKGR) is removed for receptor activation. At 35–69 (SLIGNVDNSPVVAGRGVTVKPGFSVDEFSTSVLTG) the chain is on the extracellular side. A helical transmembrane segment spans residues 70–99 (KLTTVFLPVVYTIVFVVGLPSNGMALWVFL). The Cytoplasmic segment spans residues 100-106 (FRTKKKH). Residues 107 to 135 (PAVIYMANLALADLLSVTWFPLKIAYHIH) form a helical membrane-spanning segment. The Extracellular portion of the chain corresponds to 136–147 (GNNWIYGESLCK). The cysteines at positions 146 and 224 are disulfide-linked. The chain crosses the membrane as a helical span at residues 148–175 (VLIGFFYGNMYCSILFMTCLSVQRYWVI). The Cytoplasmic portion of the chain corresponds to 176 to 181 (VNPMVH). A helical membrane pass occupies residues 182–209 (PKKQANIAIGVSLGIWLLILLLTIPLYV). Over 210–233 (VKQTSYIRALNITTCHDVLPEEVL) the chain is Extracellular. Asparagine 220 carries N-linked (GlcNAc...) asparagine glycosylation. Residues 234 to 267 (VGDMFNYFLSLAIGVFLFPAFLTASAYVLMIRTL) traverse the membrane as a helical segment. The Cytoplasmic segment spans residues 268–275 (QSSAMDES). A helical membrane pass occupies residues 276–315 (SGKKRRRAIKLIVTVLAMYLICFTPSNLLLVVHYFLIKTR). Over 316–321 (GQSHVY) the chain is Extracellular. The helical transmembrane segment at 322–345 (ALYIVALCLSTLNSCIDPFVYYFI) threads the bilayer. The Cytoplasmic portion of the chain corresponds to 346–395 (SQDFRDHAKNALLCRSVRTVKRMQVSLSSKKFSGKSSSYSSSSTSVKGSY). A lipid anchor (S-palmitoyl cysteine) is attached at cysteine 359.

The protein belongs to the G-protein coupled receptor 1 family. Interacts with TLR4, COPS5 and TMED2. Interacts with GNAQ, GNA11, GNA12, GNA13 and GNA14. In terms of processing, a proteolytic cleavage generates a new N-terminus that functions as a tethered ligand. Activating serine proteases include trypsin, mast cell tryptase, coagulation factors VII and Xa, myeloblastin/PRTN3 and membrane-type serine protease 1/ST14. Proposed subsequent cleavage by serine proteases is leading to receptor deactivation and include neutrophil elastase and cathepsin G. At least in part, implicated proteases are also shown to activate the receptor; the glycosylation status of the receptor is thought to contribute to the difference. N-glycosylated and sialylated. Post-translationally, multiple phosphorylated on serine and threonine residues in the cytoplasmic region upon receptor activation; required for receptor desensitization and recruitment of beta-arrestin. In terms of processing, monoubiquitinated by CBL at the plasma membrane and in early endosomes; not required for receptor endocytosis but for translocation to late endosomes or lysosomes. Deubiquitination involves STAMBP and USP8; required for lysosomal trafficking and receptor degradation.

The protein localises to the cell membrane. In terms of biological role, receptor for trypsin and trypsin-like enzymes coupled to G proteins. Its function is mediated through the activation of several signaling pathways including phospholipase C (PLC), intracellular calcium, mitogen-activated protein kinase (MAPK), I-kappaB kinase/NF-kappaB and Rho. Can also be transactivated by cleaved F2R/PAR1. Involved in modulation of inflammatory responses and regulation of innate and adaptive immunity, and acts as a sensor for proteolytic enzymes generated during infection. Generally is promoting inflammation. Can signal synergistically with TLR4 and probably TLR2 in inflammatory responses and modulates TLR3 signaling. Has a protective role in establishing the endothelial barrier; the activity involves coagulation factor X. Regulates endothelial cell barrier integrity during neutrophil extravasation, probably following proteolytic cleavage by PRTN3. Proposed to have a bronchoprotective role in airway epithelium, but also shown to compromise the airway epithelial barrier by interrupting E-cadherin adhesion. Involved in the regulation of vascular tone; activation results in hypotension presumably mediated by vasodilation. Associates with a subset of G proteins alpha subunits such as GNAQ, GNA11, GNA14, GNA12 and GNA13, but probably not with G(o) alpha, G(i) subunit alpha-1 and G(i) subunit alpha-2. Believed to be a class B receptor which internalizes as a complex with arrestin and traffic with it to endosomal vesicles, presumably as desensitized receptor, for extended periods of time. Mediates inhibition of TNF-alpha stimulated JNK phosphorylation via coupling to GNAQ and GNA11; the function involves dissociation of RIPK1 and TRADD from TNFR1. Mediates phosphorylation of nuclear factor NF-kappa-B RELA subunit at 'Ser-536'; the function involves IKBKB and is predominantly independent of G proteins. Involved in cellular migration. Involved in cytoskeletal rearrangement and chemotaxis through beta-arrestin-promoted scaffolds; the function is independent of GNAQ and GNA11 and involves promotion of cofilin dephosphorylation and actin filament severing. Induces redistribution of COPS5 from the plasma membrane to the cytosol and activation of the JNK cascade is mediated by COPS5. Involved in the recruitment of leukocytes to the sites of inflammation and is the major PAR receptor capable of modulating eosinophil function such as pro-inflammatory cytokine secretion, superoxide production and degranulation. During inflammation promotes dendritic cell maturation, trafficking to the lymph nodes and subsequent T-cell activation. Involved in antimicrobial response of innate immune cells; activation enhances phagocytosis of Gram-positive and killing of Gram-negative bacteria. Acts synergistically with interferon-gamma in enhancing antiviral responses. Probably mediates activation of pro-inflammatory and pro-fibrotic responses in fibroblasts, triggered by coagulation factor Xa (F10). Probably mediates activation of barrier protective signaling responses in endothelial cells, triggered by coagulation factor Xa (F10). The sequence is that of Proteinase-activated receptor 2 (F2RL1) from Bos taurus (Bovine).